Here is a 1829-residue protein sequence, read N- to C-terminus: Unconventional myosin-Va (1829 aa).

Positions 8–60 constitute a Myosin N-terminal SH3-like domain; the sequence is TKYARVWIPDPEEVWKSAELLKDYKPGDKVLQLRLEEGKDLEYCLDPKTKELP. Residues 69–764 form the Myosin motor domain; it reads VGENDLTALS…QVAYLEKIRA (696 aa). Position 163–170 (163–170) interacts with ATP; the sequence is GESGAGKT. The segment at 599–635 is disordered; that stretch reads AISPTSATPSGRVPLSRTPVKPAKARPGQTSKEHKKT. Residues 644–666 are actin-binding; sequence LHLLMETLNATTPHYVRCIKPND. 6 IQ domains span residues 767–789, 790–814, 815–837, 838–862, 863–887, and 888–915; these read LRAA…KYMR, MRRA…TFLR, RTRA…RYQC, MRDA…QMML, REHK…HRTL, and KAIV…EARS. 2 coiled-coil regions span residues 916–1239 and 1315–1419; these read VERY…PEVT and GLKE…ELEV. 2 disordered regions span residues 1106–1148 and 1170–1199; these read IPKP…SEKK and KQSL…PIRG. The segment covering 1117-1131 has biased composition (polar residues); the sequence is THSSNESEYTFSSEI. 2 stretches are compositionally biased toward basic and acidic residues: residues 1137–1148 and 1170–1196; these read LPLRMEEPSEKK and KQSL…ERPP. Residues 1508 to 1784 enclose the Dilute domain; it reads TSTINGIKKV…IRTIQLRLRD (277 aa). Thr-1734 carries the post-translational modification Phosphothreonine.

It belongs to the TRAFAC class myosin-kinesin ATPase superfamily. Myosin family. In terms of assembly, may be a homodimer, which associates with multiple calmodulin or myosin light chains. Neuronal and non-neuronal cells of the brain.

The protein localises to the golgi apparatus membrane. It catalyses the reaction ATP + H2O = ADP + phosphate + H(+). Functionally, processive actin-based motor that can move in large steps approximating the 36-nm pseudo-repeat of the actin filament. Can hydrolyze ATP in the presence of actin, which is essential for its function as a motor protein. Involved in melanosome transport. Also mediates the transport of vesicles to the plasma membrane. May also be required for some polarization process involved in dendrite formation. The sequence is that of Unconventional myosin-Va (MYO5A) from Gallus gallus (Chicken).